The primary structure comprises 448 residues: MHFIAISINHRTADVALREQVAFRDDALRLAHEDLFETKSILENVILSTCNRTEVYAIVDQIHTGRYYIQRFLARSFGFDVDDIKNMSEVKVGDEAVEHLLRVTSGLDSIVLGETQILGQMRDAFFLAQDIQTTGTIFNHLFKQAITFAKKAHNETDIADNAVSVSYAAVELAKKVFGKLKGKQTIIIGAGEMSELSLLNLLGSGIDDITVVNRTETNAYKLATKHGVNYNTLESLPTLLTNADIVISSTSSPDFIVTKSMIESVNLKRKASSLLLIDIAVPRDIEPNVNISENIFSYDVDDLKGLVDANLRERQMAADFIASQIPDEVQAHNDWVNMLGVVPVIRALREKAMTIQSETMDSIDRKLPDLSDRERTIISKHTKSIINQMLKDPIKQAKELSNDKRSNEKLELFQNIFDIDAADPYEDIKAHKAQKEKEVSIRHIFSFE.

Substrate contacts are provided by residues 49 to 52 (TCNR), serine 109, 114 to 116 (ETQ), and glutamine 120. The Nucleophile role is filled by cysteine 50. 189–194 (GAGEMS) serves as a coordination point for NADP(+).

This sequence belongs to the glutamyl-tRNA reductase family. Homodimer.

The enzyme catalyses (S)-4-amino-5-oxopentanoate + tRNA(Glu) + NADP(+) = L-glutamyl-tRNA(Glu) + NADPH + H(+). Its pathway is porphyrin-containing compound metabolism; protoporphyrin-IX biosynthesis; 5-aminolevulinate from L-glutamyl-tRNA(Glu): step 1/2. Functionally, catalyzes the NADPH-dependent reduction of glutamyl-tRNA(Glu) to glutamate 1-semialdehyde (GSA). The protein is Glutamyl-tRNA reductase of Staphylococcus haemolyticus (strain JCSC1435).